The chain runs to 381 residues: E3 ubiquitin-protein ligase RNF34 (381 aa).

Residues 56 to 107 (EGPNIVCKACGLSFSVFRKKHVCCDCKKDFCSLCSVSQENLRRCSTCHLLQE) form an FYVE-type zinc finger. One can recognise an SAP 1 domain in the interval 115–134 (LMRLKVKDLRQYLLLRNVPT). Serine 169 is subject to Phosphoserine. The disordered stretch occupies residues 216–261 (LASANTDDEDGEEDDDDDDDDDDEDDDEQEENLEEQNPGLSKKKAR). Acidic residues predominate over residues 221-249 (TDDEDGEEDDDDDDDDDDEDDDEQEENLE). 2 positions are modified to phosphoserine: serine 263 and serine 265. In terms of domain architecture, SAP 2 spans 273 to 287 (VEGMSVRQLKEILAR). The RING-type zinc-finger motif lies at 334–369 (CRICMDAVIDCVLLECGHMVTCTKCGKRMSECPICR).

In terms of assembly, interacts with CASP8 and CASP10. Interacts with p53/TP53; involved in p53/TP53 ubiquitination. Interacts (via RING-type zinc finger) with MDM2; the interaction stabilizes MDM2. Interacts (via RING-type zinc finger) with PPARGC1A. Interacts with NOD1. In terms of processing, proteolytically cleaved by caspases upon induction of apoptosis by TNF. Post-translationally, autoubiquitinated (in vitro). As to expression, ubiquitous. Detected in brain, cerebellum, midbrain, hippocampus, striatum, heart, lung, kidney, muscle, spleen and testis.

The protein localises to the cell membrane. It localises to the endomembrane system. Its subcellular location is the nucleus. It is found in the nucleus speckle. The protein resides in the cytoplasm. The protein localises to the cytosol. It carries out the reaction S-ubiquitinyl-[E2 ubiquitin-conjugating enzyme]-L-cysteine + [acceptor protein]-L-lysine = [E2 ubiquitin-conjugating enzyme]-L-cysteine + N(6)-ubiquitinyl-[acceptor protein]-L-lysine.. The protein operates within protein modification; protein ubiquitination. In terms of biological role, E3 ubiquitin-protein ligase that regulates several biological processes through the ubiquitin-mediated proteasomal degradation of various target proteins. Ubiquitinates the caspases CASP8 and CASP10, promoting their proteasomal degradation, to negatively regulate cell death downstream of death domain receptors in the extrinsic pathway of apoptosis. May mediate 'Lys-48'-linked polyubiquitination of RIPK1 and its subsequent proteasomal degradation thereby indirectly regulating the tumor necrosis factor-mediated signaling pathway. Negatively regulates p53/TP53 through its direct ubiquitination and targeting to proteasomal degradation. Indirectly, may also negatively regulate p53/TP53 through ubiquitination and degradation of SFN. Mediates PPARGC1A proteasomal degradation probably through ubiquitination thereby indirectly regulating the metabolism of brown fat cells. Possibly involved in innate immunity, through 'Lys-48'-linked polyubiquitination of NOD1 and its subsequent proteasomal degradation. This is E3 ubiquitin-protein ligase RNF34 from Rattus norvegicus (Rat).